Here is a 228-residue protein sequence, read N- to C-terminus: Cytochrome c oxidase subunit 2 (228 aa).

The Mitochondrial intermembrane portion of the chain corresponds to 1–26 (MATWANLGLQNSSSPLMEQLNFFHDH). Residues 27–48 (TLLILIMITVMIAYIMFMLFFN) traverse the membrane as a helical segment. Topologically, residues 49-62 (KFTNRYLLHGQTIE) are mitochondrial matrix. A helical transmembrane segment spans residues 63-82 (IIWTILPAIILMFIAFPSLR). Residues 83 to 228 (LLYLMDEINS…FIKWISSQMN (146 aa)) lie on the Mitochondrial intermembrane side of the membrane. Cu cation is bound by residues His161, Cys196, Glu198, Cys200, His204, and Met207. Glu198 is a Mg(2+) binding site.

This sequence belongs to the cytochrome c oxidase subunit 2 family. As to quaternary structure, component of the cytochrome c oxidase (complex IV, CIV), a multisubunit enzyme composed of a catalytic core of 3 subunits and several supernumerary subunits. The complex exists as a monomer or a dimer and forms supercomplexes (SCs) in the inner mitochondrial membrane with ubiquinol-cytochrome c oxidoreductase (cytochrome b-c1 complex, complex III, CIII). Requires Cu cation as cofactor.

Its subcellular location is the mitochondrion inner membrane. The catalysed reaction is 4 Fe(II)-[cytochrome c] + O2 + 8 H(+)(in) = 4 Fe(III)-[cytochrome c] + 2 H2O + 4 H(+)(out). Its function is as follows. Component of the cytochrome c oxidase, the last enzyme in the mitochondrial electron transport chain which drives oxidative phosphorylation. The respiratory chain contains 3 multisubunit complexes succinate dehydrogenase (complex II, CII), ubiquinol-cytochrome c oxidoreductase (cytochrome b-c1 complex, complex III, CIII) and cytochrome c oxidase (complex IV, CIV), that cooperate to transfer electrons derived from NADH and succinate to molecular oxygen, creating an electrochemical gradient over the inner membrane that drives transmembrane transport and the ATP synthase. Cytochrome c oxidase is the component of the respiratory chain that catalyzes the reduction of oxygen to water. Electrons originating from reduced cytochrome c in the intermembrane space (IMS) are transferred via the dinuclear copper A center (CU(A)) of subunit 2 and heme A of subunit 1 to the active site in subunit 1, a binuclear center (BNC) formed by heme A3 and copper B (CU(B)). The BNC reduces molecular oxygen to 2 water molecules using 4 electrons from cytochrome c in the IMS and 4 protons from the mitochondrial matrix. The chain is Cytochrome c oxidase subunit 2 (COII) from Aedes aegypti (Yellowfever mosquito).